The following is a 338-amino-acid chain: Inositol 2-dehydrogenase 4 (338 aa).

Belongs to the Gfo/Idh/MocA family. Homotetramer.

The enzyme catalyses myo-inositol + NAD(+) = scyllo-inosose + NADH + H(+). Involved in the oxidation of myo-inositol (MI) to 2-keto-myo-inositol (2KMI or 2-inosose). The sequence is that of Inositol 2-dehydrogenase 4 from Saccharopolyspora erythraea (strain ATCC 11635 / DSM 40517 / JCM 4748 / NBRC 13426 / NCIMB 8594 / NRRL 2338).